Consider the following 153-residue polypeptide: Putative OPA3-like protein CG43998 (153 aa).

Positions 101-153 (ELSKTYTKTKKQNQEIEDQKRVLDECVDCISADVERNQREINWIKAALKNVEK) form a coiled coil.

Belongs to the OPA3 family.

The sequence is that of Putative OPA3-like protein CG43998 from Drosophila melanogaster (Fruit fly).